The primary structure comprises 279 residues: Dihydropteroate synthase type-1 (279 aa).

Residues 1–258 (MVTVFGILNL…APGDLRSAIT (258 aa)) form the Pterin-binding domain. A Mg(2+)-binding site is contributed by asparagine 9. Residues aspartate 82, asparagine 101, aspartate 173, lysine 212, and 246-248 (RTH) contribute to the (7,8-dihydropterin-6-yl)methyl diphosphate site.

This sequence belongs to the DHPS family. In terms of assembly, homodimer or homotrimer. The cofactor is Mg(2+).

It carries out the reaction (7,8-dihydropterin-6-yl)methyl diphosphate + 4-aminobenzoate = 7,8-dihydropteroate + diphosphate. It functions in the pathway cofactor biosynthesis; tetrahydrofolate biosynthesis; 7,8-dihydrofolate from 2-amino-4-hydroxy-6-hydroxymethyl-7,8-dihydropteridine diphosphate and 4-aminobenzoate: step 1/2. In terms of biological role, catalyzes the condensation of para-aminobenzoate (pABA) with 6-hydroxymethyl-7,8-dihydropterin diphosphate (DHPt-PP) to form 7,8-dihydropteroate (H2Pte), the immediate precursor of folate derivatives. In Corynebacterium glutamicum (Brevibacterium saccharolyticum), this protein is Dihydropteroate synthase type-1 (sulI).